We begin with the raw amino-acid sequence, 399 residues long: Tyrosine--tRNA ligase 2 (399 aa).

A 'HIGH' region motif is present at residues 42 to 51 (PTAPDLHLGH). A 'KMSKS' region motif is present at residues 226–230 (KMSKS). ATP is bound at residue K229. In terms of domain architecture, S4 RNA-binding spans 336–396 (MPVASVLNKA…GKKAFARITL (61 aa)).

This sequence belongs to the class-I aminoacyl-tRNA synthetase family. TyrS type 2 subfamily. As to quaternary structure, homodimer.

The protein localises to the cytoplasm. It catalyses the reaction tRNA(Tyr) + L-tyrosine + ATP = L-tyrosyl-tRNA(Tyr) + AMP + diphosphate + H(+). Catalyzes the attachment of tyrosine to tRNA(Tyr) in a two-step reaction: tyrosine is first activated by ATP to form Tyr-AMP and then transferred to the acceptor end of tRNA(Tyr). The polypeptide is Tyrosine--tRNA ligase 2 (Pseudomonas aeruginosa (strain ATCC 15692 / DSM 22644 / CIP 104116 / JCM 14847 / LMG 12228 / 1C / PRS 101 / PAO1)).